We begin with the raw amino-acid sequence, 881 residues long: MKNPYDSKKIESYFFMFWKKNNLFKKKLNSNKDNFCIILPPPNITGDLHVGHAFQQSIIDIFIRYNYMKGNNVLLQSGIDHAGISTQSILEKKIYFYENKNRFDYGRKNFIKEIWKWKEESEKKICYQINKLGCFTDLNKIRFTMDKDSCKAVNNVFLKLYKDKLIYKKKKLMHWDVKLRTVISDLEIENREINGKLWYIKYFFSENSNKNSKLNFLEIATTRPETIFGDVAVAVNPLDARYNNLIGKYIKVPLTNRSIPIIQDDYVKMDYGSGCVKITPGHDFNDFSICKNHKLNIINILTISGKICKKPKVYDFNGNSVSDTNIKIPKELQGLSISEARNNIVYKLNRKEYITKFEYKKVVLPFGDRSGDILEPMLTNQWYIKTKKLSEVAIEAVKEKKIKFISKQYENMYFGWMENIKDWCISRQLWWGHRIPIWYDVNKNQYPGISESDVRDNFKINKEEILTQEEDVLDTWFSSAIWSFASLGWPQKSIKFDTFHPTNLIISGFDIIYFWISRMIMLTMYIIKDSFGNPQIPFKNIFITGLIRDKNGIKMSKSKGNVIDPIDIIDGISLEDLIKKRTKEISNIKLIKKIEKITKKEFPNGIQNHGADAVRLSMASISCSNRKINIDIKKIIGYKNFCNKLWNVSKFIIINLKNKKVSFEEKEINLHKIDNWILHKYNKVFKYYKYNIDNFRLDLVVNILYEFIWHQFCDWYIENSKIIFKNNIISRLNNTCYTLFFILENSLKMLHPFIPFITEEIWKNLSKMVRNERKNTTILEFFPKKYLFLKKDNSFNEIECIKNIITCIRKLKFEKKTKFNKLVDVCFINNSYEEKIIILNNIEIIKNIAFVKNVDFSRSIPKNVLKKDIKIINNIKIYIYN.

A 'HIGH' region motif is present at residues 42–52; it reads PNITGDLHVGH. Residues 554–558 carry the 'KMSKS' region motif; it reads KMSKS. K557 serves as a coordination point for ATP.

This sequence belongs to the class-I aminoacyl-tRNA synthetase family. ValS type 1 subfamily. Monomer.

It localises to the cytoplasm. It catalyses the reaction tRNA(Val) + L-valine + ATP = L-valyl-tRNA(Val) + AMP + diphosphate. In terms of biological role, catalyzes the attachment of valine to tRNA(Val). As ValRS can inadvertently accommodate and process structurally similar amino acids such as threonine, to avoid such errors, it has a 'posttransfer' editing activity that hydrolyzes mischarged Thr-tRNA(Val) in a tRNA-dependent manner. The sequence is that of Valine--tRNA ligase from Wigglesworthia glossinidia brevipalpis.